The following is a 433-amino-acid chain: tRNA (guanine(10)-N(2))-methyltransferase (433 aa).

Belongs to the class I-like SAM-binding methyltransferase superfamily. TRM11 methyltransferase family. As to quaternary structure, interacts with TRM112.

It localises to the cytoplasm. The enzyme catalyses guanosine(10) in tRNA + S-adenosyl-L-methionine = N(2)-methylguanosine(10) in tRNA + S-adenosyl-L-homocysteine + H(+). Its function is as follows. Catalytic subunit of an S-adenosyl-L-methionine-dependent tRNA methyltransferase complex that mediates the methylation of the guanosine nucleotide at position 10 (m2G10) in tRNAs. This is tRNA (guanine(10)-N(2))-methyltransferase (TRM11) from Saccharomyces cerevisiae (strain ATCC 204508 / S288c) (Baker's yeast).